Consider the following 101-residue polypeptide: uncharacterized protein (101 aa).

This is an uncharacterized protein from Homo sapiens (Human).